Consider the following 82-residue polypeptide: Small ribosomal subunit protein uS17 (82 aa).

It belongs to the universal ribosomal protein uS17 family. Part of the 30S ribosomal subunit.

Its function is as follows. One of the primary rRNA binding proteins, it binds specifically to the 5'-end of 16S ribosomal RNA. This chain is Small ribosomal subunit protein uS17, found in Pelobacter propionicus (strain DSM 2379 / NBRC 103807 / OttBd1).